The sequence spans 422 residues: Gamma-glutamyl phosphate reductase (422 aa).

The protein belongs to the gamma-glutamyl phosphate reductase family.

It is found in the cytoplasm. The enzyme catalyses L-glutamate 5-semialdehyde + phosphate + NADP(+) = L-glutamyl 5-phosphate + NADPH + H(+). It functions in the pathway amino-acid biosynthesis; L-proline biosynthesis; L-glutamate 5-semialdehyde from L-glutamate: step 2/2. Functionally, catalyzes the NADPH-dependent reduction of L-glutamate 5-phosphate into L-glutamate 5-semialdehyde and phosphate. The product spontaneously undergoes cyclization to form 1-pyrroline-5-carboxylate. The sequence is that of Gamma-glutamyl phosphate reductase from Saccharophagus degradans (strain 2-40 / ATCC 43961 / DSM 17024).